We begin with the raw amino-acid sequence, 457 residues long: Argininosuccinate lyase (457 aa).

Belongs to the lyase 1 family. Argininosuccinate lyase subfamily.

The protein localises to the cytoplasm. The catalysed reaction is 2-(N(omega)-L-arginino)succinate = fumarate + L-arginine. It participates in amino-acid biosynthesis; L-arginine biosynthesis; L-arginine from L-ornithine and carbamoyl phosphate: step 3/3. The polypeptide is Argininosuccinate lyase (Histophilus somni (strain 129Pt) (Haemophilus somnus)).